A 323-amino-acid chain; its full sequence is Dehydrogenase/reductase SDR family member 7B (323 aa).

At 1–4 (MDLT) the chain is on the cytoplasmic side. A helical; Signal-anchor for type II membrane protein transmembrane segment spans residues 5 to 25 (SWAIFPLLLASIGVYGLYKLL). The Lumenal segment spans residues 26-272 (QKLRSGAYLQ…AVGERRKELL (247 aa)). Serine 46 and leucine 48 together coordinate NAD(+). Serine 178 contacts substrate. Tyrosine 191, lysine 195, and threonine 226 together coordinate NAD(+). The Proton acceptor role is filled by tyrosine 191.

The protein belongs to the short-chain dehydrogenases/reductases (SDR) family.

The protein resides in the endoplasmic reticulum membrane. In terms of biological role, putative oxidoreductase. This is Dehydrogenase/reductase SDR family member 7B (dhrs7b) from Xenopus laevis (African clawed frog).